The following is a 247-amino-acid chain: 3-deoxy-manno-octulosonate cytidylyltransferase (247 aa).

Belongs to the KdsB family.

The protein localises to the cytoplasm. It carries out the reaction 3-deoxy-alpha-D-manno-oct-2-ulosonate + CTP = CMP-3-deoxy-beta-D-manno-octulosonate + diphosphate. It participates in nucleotide-sugar biosynthesis; CMP-3-deoxy-D-manno-octulosonate biosynthesis; CMP-3-deoxy-D-manno-octulosonate from 3-deoxy-D-manno-octulosonate and CTP: step 1/1. It functions in the pathway bacterial outer membrane biogenesis; lipopolysaccharide biosynthesis. Its function is as follows. Activates KDO (a required 8-carbon sugar) for incorporation into bacterial lipopolysaccharide in Gram-negative bacteria. The polypeptide is 3-deoxy-manno-octulosonate cytidylyltransferase (Methylorubrum extorquens (strain CM4 / NCIMB 13688) (Methylobacterium extorquens)).